Here is a 111-residue protein sequence, read N- to C-terminus: Cytochrome c 2.1 (111 aa).

N-acetylserine is present on S2. 4 residues coordinate heme c: C20, C23, H24, and M85.

It belongs to the cytochrome c family. Post-translationally, binds 1 heme c group covalently per subunit.

It is found in the mitochondrion intermembrane space. Electron carrier protein. The oxidized form of the cytochrome c heme group can accept an electron from the heme group of the cytochrome c1 subunit of cytochrome reductase. Cytochrome c then transfers this electron to the cytochrome oxidase complex, the final protein carrier in the mitochondrial electron-transport chain. This is Cytochrome c 2.1 (cyc-2.1) from Caenorhabditis elegans.